The chain runs to 709 residues: Phosphate acetyltransferase (709 aa).

The tract at residues 389–709 (EFCYRLKILS…TIALTSIQSL (321 aa)) is phosphate acetyltransferase.

It in the N-terminal section; belongs to the CobB/CobQ family. This sequence in the C-terminal section; belongs to the phosphate acetyltransferase and butyryltransferase family. In terms of assembly, homohexamer.

Its subcellular location is the cytoplasm. It carries out the reaction acetyl-CoA + phosphate = acetyl phosphate + CoA. It participates in metabolic intermediate biosynthesis; acetyl-CoA biosynthesis; acetyl-CoA from acetate: step 2/2. In terms of biological role, involved in acetate metabolism. The protein is Phosphate acetyltransferase (pta) of Buchnera aphidicola subsp. Schizaphis graminum (strain Sg).